The primary structure comprises 255 residues: Cell division protein ZapD (255 aa).

The protein belongs to the ZapD family. Interacts with FtsZ.

The protein resides in the cytoplasm. Cell division factor that enhances FtsZ-ring assembly. Directly interacts with FtsZ and promotes bundling of FtsZ protofilaments, with a reduction in FtsZ GTPase activity. The polypeptide is Cell division protein ZapD (Methylococcus capsulatus (strain ATCC 33009 / NCIMB 11132 / Bath)).